Consider the following 373-residue polypeptide: Flagellar P-ring protein (373 aa).

The N-terminal stretch at 1-26 is a signal peptide; the sequence is MKLFFRFLTLVAVLAMSLADVAPAWA.

The protein belongs to the FlgI family. In terms of assembly, the basal body constitutes a major portion of the flagellar organelle and consists of four rings (L,P,S, and M) mounted on a central rod.

It localises to the periplasm. It is found in the bacterial flagellum basal body. Its function is as follows. Assembles around the rod to form the L-ring and probably protects the motor/basal body from shearing forces during rotation. The polypeptide is Flagellar P-ring protein (Rhizobium leguminosarum bv. trifolii (strain WSM2304)).